Consider the following 4060-residue polypeptide: Replicase polyprotein 1a (4060 aa).

One can recognise a CoV Nsp1 globular domain in the interval 2 to 109 (FYNQVTLAVA…DFDVVFGHGA (108 aa)). A CoV Nsp2 N-terminal domain is found at 112 to 358 (VVFVDKYMCG…NTLLSNQLRL (247 aa)). Zn(2+) contacts are provided by C245, C247, C264, and C265. The tract at residues 245–265 (CNCGSESWSVGAWDGYLSSCC) is C4. The region spanning 388-778 (YDDILTNNKP…LDVYNGFLET (391 aa)) is the CoV Nsp2 middle domain. The CoV Nsp2 C-terminal domain occupies 776–898 (LETVCSVAYT…LPVAFTKLAG (123 aa)). One can recognise a Ubiquitin-like 1 domain in the interval 899 to 994 (GKISFSDDVI…VMISQWPISN (96 aa)). The Peptidase C16 1 domain occupies 1021-1262 (EVDIIEQPFE…EAGEVKPFAV (242 aa)). C1062 serves as the catalytic For PL1-PRO activity. The Zn(2+) site is built by C1134, C1136, C1163, and C1165. A C4-type 1 zinc finger spans residues 1134 to 1165 (CDCGKKFDDQVGCLFWIMPYTKLFQKGECCIC). Active-site for PL1-PRO activity residues include H1212 and D1225. Residues 1263 to 1421 (YKNVKFYLGD…AVLKFLDGLD (159 aa)) form the Macro domain. Positions 1579 to 1633 (NDNVVLKITEDGINVKDVVVESSKSLGKQLGVVSDGVDSFEGVLPINTDTVLSVA) constitute a Ubiquitin-like 2 domain. In terms of domain architecture, Peptidase C16 2 spans 1640–1886 (AFYGFEKAAL…VPTIVSEKIS (247 aa)). Residue C1678 is the For PL2-PRO activity of the active site. Zn(2+) is bound by residues C1757, C1760, C1786, and H1788. The segment at 1757–1788 (CDICKSTVVEVKSAIVCASVLKDGCDVGFCPH) adopts a C4-type 2; atypical zinc-finger fold. Active-site for PL2-PRO activity residues include H1836 and D1841. 2 helical membrane passes run 1903 to 1923 (DFVMNNIVLFLTWLLSMFSLL) and 1968 to 1988 (IVTLFKFLLLLYAIYALVFMI). Residues 1903–2131 (DFVMNNIVLF…LFVRHIIVGC (229 aa)) are HD1. Residues 1983-2048 (ALVFMIVQFS…TSLVWKHIRD (66 aa)) enclose the 3Ecto domain. Cystine bridges form between C1999–C2026 and C2017–C2023. The next 3 helical transmembrane spans lie at 2050-2070 (ILISLQPFVILVILLIFGNMY), 2073-2093 (FGLLYFVAQFISTFGSFLGFH), and 2111-2131 (FLATFIVCKIVLFVRHIIVGC). A Y1 region spans residues 2122–2212 (LFVRHIIVGC…VVKTAVQPTA (91 aa)). The CoV Nsp3 Y domain maps to 2122–2461 (LFVRHIIVGC…PATSIVAKQG (340 aa)). Residues H2126, C2131, C2136, C2139, C2172, H2175, C2179, and C2182 each contribute to the Zn(2+) site. Residues 2126–2139 (HIIVGCNNADCVAC) form a ZF1 region. The ZF2 stretch occupies residues 2172 to 2182 (CNKHNFFCVNC). The Y2 stretch occupies residues 2213–2302 (PAYVIIDKVD…LVNSELLSTL (90 aa)). The interval 2213 to 2461 (PAYVIIDKVD…PATSIVAKQG (249 aa)) is coV-Y. The Y3 stretch occupies residues 2303–2359 (SVDFNGVLHKAYVDVLCNSFFKELTANMSMAECKATLGLTVSDDDFVSAVANAHRYD). The tract at residues 2360–2461 (VLLSDLSFNN…PATSIVAKQG (102 aa)) is Y4. 5 consecutive transmembrane segments (helical) span residues 2468–2488 (YNFLWYVCLFVVALFIGVSFI), 2727–2747 (GHMLFNFLFAAFITFLCFLVT), 2752–2769 (VFGDLSYGVFTVVCATLI), 2772–2792 (ISYVVTQNLFFMLLYAILYFV), and 2800–2820 (AWIWHIAYIVAYFLLIPWWLL). An HD2 region spans residues 2468-2820 (YNFLWYVCLF…YFLLIPWWLL (353 aa)). Residues 2844–2939 (LFEGDKFIGT…PTISYNSTLQ (96 aa)) enclose the Nsp4C domain. One can recognise a Peptidase C30 domain in the interval 2940–3242 (SGLKKMAQPS…VKQMYGVNLQ (303 aa)). Catalysis depends on for 3CL-PRO activity residues H2980 and C3083. The next 7 helical transmembrane spans lie at 3254–3274 (FLFSVFFTMFWAELFIYTNTI), 3279–3299 (VILTPIFCLLLFLSLVLTMFL), 3303–3323 (FLFLQVFLLPTVIATALYNCV), 3342–3362 (VLQMDVQGLVNVLVCLFVVFL), 3376–3396 (FTYVCSLIAVAYTYFYSGDFL), 3397–3417 (SLLVMFLCAISSDWYIGAIVF), and 3442–3462 (LVVYLICGYLVCTYWGILYWF). The tract at residues 3254–3462 (FLFSVFFTMF…CTYWGILYWF (209 aa)) is HD3. The 83-residue stretch at 3522–3604 (SKLTDLKCTN…SYFDNSSTLQ (83 aa)) folds into the RdRp Nsp7 cofactor domain. The region spanning 3605 to 3799 (SVASSFVSMP…LNCERVVKLQ (195 aa)) is the RdRp Nsp8 cofactor domain. In terms of domain architecture, Nsp9 ssRNA-binding spans 3800–3908 (NNEIMPGKLK…GFIGATIRLQ (109 aa)). The ExoN/MTase coactivator domain maps to 3909 to 4047 (AGKQTELAVN…DRTTIQSVDI (139 aa)). Positions 3982, 3985, 3991, 3998, 4024, 4027, 4035, and 4037 each coordinate Zn(2+). 2 zinc fingers span residues 3982–3998 (CLYCRAHVPHPSMDGYC) and 4024–4037 (CNVCGCWLGHGCAC).

The protein belongs to the coronaviruses polyprotein 1ab family. 3CL-PRO exists as monomer and homodimer. Eight copies of nsp7 and eight copies of nsp8 assemble to form a heterohexadecamer. Nsp9 is a dimer. Nsp10 forms a dodecamer. Specific enzymatic cleavages in vivo by its own proteases yield mature proteins. 3CL-PRO and PL-PRO proteinases are autocatalytically processed.

It localises to the host membrane. The protein resides in the host cytoplasm. The protein localises to the host perinuclear region. It catalyses the reaction Thiol-dependent hydrolysis of ester, thioester, amide, peptide and isopeptide bonds formed by the C-terminal Gly of ubiquitin (a 76-residue protein attached to proteins as an intracellular targeting signal).. The papain-like proteinase 1 (PLP1) and papain-like proteinase 2 (PLP2) are responsible for the cleavages located at the N-terminus of the replicase polyprotein. In addition, PLP2 possesses a deubiquitinating/deISGylating activity and processes both 'Lys-48'- and 'Lys-63'-linked polyubiquitin chains from cellular substrates. PLP2 also antagonizes innate immune induction of type I interferon by blocking the nuclear translocation of host IRF-3. Functionally, responsible for the majority of cleavages as it cleaves the C-terminus of replicase polyprotein at 11 sites. Recognizes substrates containing the core sequence [ILMVF]-Q-|-[SGACN]. Inhibited by the substrate-analog Cbz-Val-Asn-Ser-Thr-Leu-Gln-CMK. Also contains an ADP-ribose-1''-phosphate (ADRP)-binding function. In terms of biological role, nsp7-nsp8 hexadecamer may possibly confer processivity to the polymerase, maybe by binding to dsRNA or by producing primers utilized by the latter. Its function is as follows. Nsp9 is a ssRNA-binding protein. The protein is Replicase polyprotein 1a of Homo sapiens (Human).